We begin with the raw amino-acid sequence, 426 residues long: MESLTLQPINLINGEVNLPGSKSVSNRALLLAALAQGTTRLTNLLDSDDIRHMLNALQQLGVQYQLSADKTECTVEGLGQPFSVKDFTCLYLGNAGTAMRPLAAALCLGQGEFELTGEPRMKERPIGHLVDALRSAGADITYLENEHYPPLKIKGTGLDGGEVSIDGSISSQFLTAFLMAAPLAKSDTTILIKGDLVSKPYIDITLNIMAQFGVQVENQNYQKFIVPAGQVYQSPGEFLVEGDASSASYFLAAGAIKGGEVKVTGIGKNSIQGDIQFADALEAMGAEIEWGEDYIIARHRQLNAIDMDFNHIPDAAMTIATAALFAPGTTSIRNVYNWRVKETDRLHAMATELRKLGAEVEEGDDYITITSPTQLKHVAIDTYDDHRMAMCFSLVALSDTAVTINDPKCTSKTFPDYFTKLEQLSR.

Residues Lys22, Ser23, and Arg27 each contribute to the 3-phosphoshikimate site. Lys22 is a phosphoenolpyruvate binding site. Residues Gly96 and Arg124 each contribute to the phosphoenolpyruvate site. 7 residues coordinate 3-phosphoshikimate: Ser170, Ser171, Gln172, Ser198, Asp314, Asn337, and Lys341. Phosphoenolpyruvate is bound at residue Gln172. Asp314 (proton acceptor) is an active-site residue. Residues Arg345, Arg387, and Lys412 each contribute to the phosphoenolpyruvate site.

This sequence belongs to the EPSP synthase family. As to quaternary structure, monomer.

Its subcellular location is the cytoplasm. The catalysed reaction is 3-phosphoshikimate + phosphoenolpyruvate = 5-O-(1-carboxyvinyl)-3-phosphoshikimate + phosphate. Its pathway is metabolic intermediate biosynthesis; chorismate biosynthesis; chorismate from D-erythrose 4-phosphate and phosphoenolpyruvate: step 6/7. Its function is as follows. Catalyzes the transfer of the enolpyruvyl moiety of phosphoenolpyruvate (PEP) to the 5-hydroxyl of shikimate-3-phosphate (S3P) to produce enolpyruvyl shikimate-3-phosphate and inorganic phosphate. This chain is 3-phosphoshikimate 1-carboxyvinyltransferase, found in Photobacterium damsela subsp. piscicida (Pasteurella piscicida).